The following is a 155-amino-acid chain: Protein SREK1IP1 (155 aa).

The CCHC-type zinc finger occupies 13–30 (AGCKKCGYPGHLTFECRN). Residues 44-155 (VSSTSSEDSD…TPNSSEFSRK (112 aa)) are disordered. At serine 52 the chain carries Phosphoserine. Basic and acidic residues predominate over residues 66-84 (QEKRINEEEEKKKEKSKEK). Positions 85–94 (IKLKKKRKRS) are enriched in basic residues. Phosphoserine occurs at positions 96 and 97. A compositionally biased stretch (basic residues) spans 107 to 142 (QKKQKYQKKEKKKEKKSKSKKGKHHKKEKKKRKKEK). The residue at position 146 (threonine 146) is a Phosphothreonine. Over residues 146-155 (TPNSSEFSRK) the composition is skewed to polar residues.

In terms of assembly, interacts with SREK1/SFRS12.

Possible splicing regulator involved in the control of cellular survival. This Homo sapiens (Human) protein is Protein SREK1IP1 (SREK1IP1).